A 261-amino-acid chain; its full sequence is Leucine-rich repeat-containing protein 18 (261 aa).

LRR repeat units follow at residues 28–49, 51–72, 74–95, 97–118, 122–144, 145–167, and 168–189; these read GKKR…ILRL, DMDE…ISKF, NLRW…IGQM, SLLY…VELK, NIRA…GALK, ELHE…SKLP, and KLKK…EIFI.

It localises to the cytoplasm. May be involved in the regulation of spermatogenesis and sperm maturation. This is Leucine-rich repeat-containing protein 18 (LRRC18) from Homo sapiens (Human).